Here is a 149-residue protein sequence, read N- to C-terminus: D-aminoacyl-tRNA deacylase (149 aa).

The Gly-cisPro motif, important for rejection of L-amino acids motif lies at Gly-137–Pro-138.

This sequence belongs to the DTD family. In terms of assembly, homodimer.

The protein resides in the cytoplasm. The enzyme catalyses glycyl-tRNA(Ala) + H2O = tRNA(Ala) + glycine + H(+). It carries out the reaction a D-aminoacyl-tRNA + H2O = a tRNA + a D-alpha-amino acid + H(+). Its function is as follows. An aminoacyl-tRNA editing enzyme that deacylates mischarged D-aminoacyl-tRNAs. Also deacylates mischarged glycyl-tRNA(Ala), protecting cells against glycine mischarging by AlaRS. Acts via tRNA-based rather than protein-based catalysis; rejects L-amino acids rather than detecting D-amino acids in the active site. By recycling D-aminoacyl-tRNA to D-amino acids and free tRNA molecules, this enzyme counteracts the toxicity associated with the formation of D-aminoacyl-tRNA entities in vivo and helps enforce protein L-homochirality. This is D-aminoacyl-tRNA deacylase from Clostridium beijerinckii (strain ATCC 51743 / NCIMB 8052) (Clostridium acetobutylicum).